We begin with the raw amino-acid sequence, 125 residues long: Protein sigma-1-small (125 aa).

The protein belongs to the orthoreovirus sigma-1s protein family.

The sequence is that of Protein sigma-1-small (S1) from Mammalia (T2J).